The sequence spans 1219 residues: Disease resistance-like protein DSC1 (1219 aa).

The TIR domain maps to 9–176; that stretch reads AEFDVFLSFR…EIAVDTFKKL (168 aa). Glu-83 is a catalytic residue. An NB-ARC domain is found at 197–446; it reads LEKLLSWEDL…DIACFFRSEN (250 aa). An ATP-binding site is contributed by 216-222; sequence GMVGIGK. 11 LRR repeats span residues 468-493, 538-563, 597-619, 620-642, 665-689, 690-713, 733-757, 759-780, 804-827, 854-877, and 878-899; these read LVDK…MAKE, TDKI…AFQG, PNEL…DFDP, KNLV…EKDV, AHNL…INCL, EKLI…IKTQ, SENV…QTFR, LALL…LYKL, MESL…MHLS, CSRL…IGGL, and SSLQ…SFNQ.

This sequence belongs to the disease resistance NB-LRR family. As to quaternary structure, interacts with CAMTA3 and DSC2.

It catalyses the reaction NAD(+) + H2O = ADP-D-ribose + nicotinamide + H(+). TIR-NB-LRR receptor-like protein involved in plant defense. Acts as a trigger of hypersensitive response (HR). Functions as a guard of CAMTA3, a negative regulator of immunity, during pathogen infection. This Arabidopsis thaliana (Mouse-ear cress) protein is Disease resistance-like protein DSC1.